A 307-amino-acid chain; its full sequence is Probable RuBisCO transcriptional regulator (307 aa).

The HTH lysR-type domain maps to 4–61; the sequence is FTLQQLRILKAVATEKNFTKAAELLYLSQPSLSKQIKTLEKNLDILLVNRENNKISLT. The segment at residues 21–40 is a DNA-binding region (H-T-H motif); that stretch reads FTKAAELLYLSQPSLSKQIK.

The protein belongs to the LysR transcriptional regulatory family.

The protein resides in the plastid. It is found in the chloroplast. In terms of biological role, trans-acting transcriptional regulator of RuBisCO genes (rbcL and rbcS) expression. The sequence is that of Probable RuBisCO transcriptional regulator (rbcR) from Phaeodactylum tricornutum (strain CCAP 1055/1).